The primary structure comprises 233 residues: Large ribosomal subunit protein uL1 (233 aa).

Belongs to the universal ribosomal protein uL1 family. Part of the 50S ribosomal subunit.

In terms of biological role, binds directly to 23S rRNA. The L1 stalk is quite mobile in the ribosome, and is involved in E site tRNA release. Protein L1 is also a translational repressor protein, it controls the translation of the L11 operon by binding to its mRNA. This Syntrophomonas wolfei subsp. wolfei (strain DSM 2245B / Goettingen) protein is Large ribosomal subunit protein uL1.